The following is a 478-amino-acid chain: GDP-fucose protein O-fucosyltransferase 3 (478 aa).

Residues 1 to 8 (MVWIQRRR) lie on the Cytoplasmic side of the membrane. The helical; Signal-anchor for type II membrane protein transmembrane segment at 9–31 (LLASCLCITATVFLLVTLQVVVE) threads the bilayer. The Lumenal portion of the chain corresponds to 32–478 (LGKFERKKFK…QEFWALVFKD (447 aa)). Asparagine 110 and asparagine 168 each carry an N-linked (GlcNAc...) asparagine glycan. An intrachain disulfide couples cysteine 389 to cysteine 392.

This sequence belongs to the glycosyltransferase 10 family.

The protein resides in the endoplasmic reticulum membrane. The enzyme catalyses L-threonyl-[protein] + GDP-beta-L-fucose = 3-O-(alpha-L-fucosyl)-L-threonyl-[protein] + GDP + H(+). The catalysed reaction is L-seryl-[protein] + GDP-beta-L-fucose = 3-O-(alpha-L-fucosyl)-L-seryl-[protein] + GDP + H(+). Its pathway is protein modification; protein glycosylation. Protein O-fucosyltransferase that specifically catalyzes O-fucosylation of serine or threonine residues in EMI domains of target proteins, such as MMRN1, MMRN2 and EMID1. Attaches fucose through an O-glycosidic linkage. O-fucosylation of EMI domain-containing proteins may be required for facilitating protein folding and secretion. May also show alpha-(1,3)-fucosyltransferase activity toward the innermost N-acetyl glucosamine (GlcNAc) residue in biantennary N-glycan acceptors. However, this was tested with a library of synthetic substrates and this activity is unsure in vivo. May be involved in biosynthesis of Lewis X-carrying biantennary N-glycans that regulate neuron stem cell self-renewal during brain development. In Canis lupus familiaris (Dog), this protein is GDP-fucose protein O-fucosyltransferase 3 (FUT10).